A 673-amino-acid polypeptide reads, in one-letter code: Glycine--tRNA ligase beta subunit (673 aa).

Belongs to the class-II aminoacyl-tRNA synthetase family. As to quaternary structure, tetramer of two alpha and two beta subunits.

The protein resides in the cytoplasm. The catalysed reaction is tRNA(Gly) + glycine + ATP = glycyl-tRNA(Gly) + AMP + diphosphate. The chain is Glycine--tRNA ligase beta subunit from Lactococcus lactis subsp. cremoris (strain MG1363).